Here is a 180-residue protein sequence, read N- to C-terminus: Ferric nitrobindin-like protein (180 aa).

The GXWXGXG motif lies at 21 to 27; the sequence is GRWEGAG.

Belongs to the nitrobindin family.

This is Ferric nitrobindin-like protein from Kineococcus radiotolerans (strain ATCC BAA-149 / DSM 14245 / SRS30216).